Reading from the N-terminus, the 247-residue chain is Homeobox-leucine zipper protein HOX15 (247 aa).

The tract at residues 1-44 (MAQDDEDVGLALGLSLGSGGHRRQRESRDEAPSSAAASLLTLRL) is disordered. The span at 32-44 (PSSAAASLLTLRL) shows a compositional bias: low complexity. Positions 91 to 150 (NSRKKLRLSKEQSALLEDRFKEHSTLNPKQKVALAKQLNLRPRQVEVWFQNRRARTKLKQ) form a DNA-binding region, homeobox. The leucine-zipper stretch occupies residues 149-193 (KQTEVDCELLKRCCETLTEENRRLHRELQQLRALTHSTAAGFFMA). Residues 221–247 (SPTAAADRTNKPTAPHLFSPFAKSAAC) are disordered.

Belongs to the HD-ZIP homeobox family. Class II subfamily. In terms of tissue distribution, expressed in seedlings, stems, leaf blades and panicles.

The protein localises to the nucleus. Probable transcription factor. This Oryza sativa subsp. japonica (Rice) protein is Homeobox-leucine zipper protein HOX15 (HOX15).